A 170-amino-acid chain; its full sequence is Thialysine N-epsilon-acetyltransferase (170 aa).

The N-acetyltransferase domain maps to 4 to 166 (VMIREAKEGD…FRFEGEAMRE (163 aa)). 27–28 (YE) serves as a coordination point for substrate. Lysine 29 carries the N6-acetyllysine modification. Residue glutamate 92 coordinates substrate. Acetyl-CoA is bound by residues 94-96 (IYV), 102-107 (GQGIGS), 133-135 (NKR), and tyrosine 140. Tyrosine 140 serves as the catalytic Proton donor. Glutamate 152 contributes to the substrate binding site.

Belongs to the acetyltransferase family. In terms of assembly, homodimer.

It is found in the cytoplasm. The catalysed reaction is S-(2-aminoethyl)-L-cysteine + acetyl-CoA = S-(2-acetamidoethyl)-L-cysteine + CoA + H(+). It carries out the reaction an alkane-alpha,omega-diamine + acetyl-CoA = an N-acetylalkane-alpha,omega-diamine + CoA + H(+). Catalyzes the N-acetylation of the amino acid thialysine (S-(2-aminoethyl)-L-cysteine), a L-lysine analog with the 4-methylene group substituted with a sulfur. May also catalyze acetylation of polyamines, such as norspermidine, spermidine or spermine. However, ability to acetylate polyamines is weak, suggesting that it does not act as a diamine acetyltransferase in vivo. This is Thialysine N-epsilon-acetyltransferase from Bos taurus (Bovine).